Reading from the N-terminus, the 272-residue chain is Sulfur carrier protein FdhD (272 aa).

The Cysteine persulfide intermediate role is filled by Cys-114.

This sequence belongs to the FdhD family.

Its subcellular location is the cytoplasm. In terms of biological role, required for formate dehydrogenase (FDH) activity. Acts as a sulfur carrier protein that transfers sulfur from IscS to the molybdenum cofactor prior to its insertion into FDH. This Mycolicibacterium paratuberculosis (strain ATCC BAA-968 / K-10) (Mycobacterium paratuberculosis) protein is Sulfur carrier protein FdhD.